We begin with the raw amino-acid sequence, 551 residues long: L-lactate permease (551 aa).

The next 12 membrane-spanning stretches (helical) occupy residues 13–33, 37–57, 70–90, 131–151, 159–179, 194–214, 244–264, 366–386, 405–425, 438–458, 494–514, and 530–550; these read NIWL…FALI, LKGY…ALLF, VYGF…AVFV, GAAG…GLGF, LCLI…PILV, MVGR…MAIM, FIGP…CLTL, FDWF…SIVW, LALP…SNYS, TGHA…FLTG, VTGK…VGLV, and IFTC…TWMI.

The protein belongs to the lactate permease family.

The protein resides in the cell inner membrane. It carries out the reaction (S)-lactate(in) + H(+)(in) = (S)-lactate(out) + H(+)(out). The catalysed reaction is (R)-lactate(in) + H(+)(in) = (R)-lactate(out) + H(+)(out). It catalyses the reaction glycolate(in) + H(+)(in) = glycolate(out) + H(+)(out). Uptake of L-lactate across the membrane. Can also transport D-lactate and glycolate. Seems to be driven by a proton motive force. This Escherichia coli O6:H1 (strain CFT073 / ATCC 700928 / UPEC) protein is L-lactate permease (lldP).